Here is a 237-residue protein sequence, read N- to C-terminus: Purine nucleoside phosphorylase DeoD-type (237 aa).

His4 is a binding site for a purine D-ribonucleoside. Phosphate contacts are provided by residues Gly20, Arg24, Arg43, and 87-90 (RVGT). A purine D-ribonucleoside is bound by residues 179 to 181 (EME) and 203 to 204 (SD). Asp204 acts as the Proton donor in catalysis.

This sequence belongs to the PNP/UDP phosphorylase family. Homohexamer; trimer of homodimers.

The catalysed reaction is a purine D-ribonucleoside + phosphate = a purine nucleobase + alpha-D-ribose 1-phosphate. It catalyses the reaction a purine 2'-deoxy-D-ribonucleoside + phosphate = a purine nucleobase + 2-deoxy-alpha-D-ribose 1-phosphate. Catalyzes the reversible phosphorolytic breakdown of the N-glycosidic bond in the beta-(deoxy)ribonucleoside molecules, with the formation of the corresponding free purine bases and pentose-1-phosphate. The chain is Purine nucleoside phosphorylase DeoD-type from Clostridium beijerinckii (strain ATCC 51743 / NCIMB 8052) (Clostridium acetobutylicum).